Reading from the N-terminus, the 530-residue chain is [Pyruvate dehydrogenase [acetyl-transferring]]-phosphatase 2, mitochondrial (530 aa).

The N-terminal 67 residues, Met-1–Thr-67, are a transit peptide targeting the mitochondrion. A PPM-type phosphatase domain is found at Val-107 to Phe-518. Mn(2+)-binding residues include Asp-142, Gly-143, Asp-413, and Asp-509.

This sequence belongs to the PP2C family. Requires Mg(2+) as cofactor. As to expression, highly expressed in liver.

The protein resides in the mitochondrion. It catalyses the reaction O-phospho-L-seryl-[pyruvate dehydrogenase E1 alpha subunit] + H2O = L-seryl-[pyruvate dehydrogenase E1 alpha subunit] + phosphate. Its activity is regulated as follows. Mg(2+)-dependent protein phosphatase. Phosphatase activity is increased in the presence of spermine, a naturally produced polyamine. Its function is as follows. Mitochondrial enzyme that catalyzes the dephosphorylation and concomitant reactivation of the alpha subunit of the E1 component of the pyruvate dehydrogenase complex (PDC), thereby stimulating the conversion of pyruvate into acetyl-CoA. Acts as a crucial regulator of T cell metabolism and function, with a particular focus on T-helper Th17. This chain is [Pyruvate dehydrogenase [acetyl-transferring]]-phosphatase 2, mitochondrial (Pdp2), found in Rattus norvegicus (Rat).